Here is a 127-residue protein sequence, read N- to C-terminus: Large ribosomal subunit protein uL22 (127 aa).

This sequence belongs to the universal ribosomal protein uL22 family. Part of the 50S ribosomal subunit.

In terms of biological role, this protein binds specifically to 23S rRNA; its binding is stimulated by other ribosomal proteins, e.g. L4, L17, and L20. It is important during the early stages of 50S assembly. It makes multiple contacts with different domains of the 23S rRNA in the assembled 50S subunit and ribosome. Functionally, the globular domain of the protein is located near the polypeptide exit tunnel on the outside of the subunit, while an extended beta-hairpin is found that lines the wall of the exit tunnel in the center of the 70S ribosome. The polypeptide is Large ribosomal subunit protein uL22 (Methylobacterium nodulans (strain LMG 21967 / CNCM I-2342 / ORS 2060)).